The following is a 130-amino-acid chain: RutC family protein in leuC 5'region (130 aa).

This sequence belongs to the RutC family.

This chain is RutC family protein in leuC 5'region, found in Leuconostoc mesenteroides subsp. cremoris.